A 356-amino-acid polypeptide reads, in one-letter code: Probable L-asparaginase 4 (356 aa).

Residues Met1–Ser22 form the signal peptide. The region spanning Pro36 to Lys356 is the Asparaginase/glutaminase domain. An N-linked (GlcNAc...) asparagine glycan is attached at Asn37. Thr46 (O-isoaspartyl threonine intermediate) is an active-site residue. The N-linked (GlcNAc...) asparagine glycan is linked to Asn52. Substrate-binding positions include Ser93 and Thr126–Asp127. Asn176 carries an N-linked (GlcNAc...) asparagine glycan.

It belongs to the asparaginase 1 family.

The protein resides in the secreted. It localises to the cell wall. It catalyses the reaction L-asparagine + H2O = L-aspartate + NH4(+). In Schizosaccharomyces pombe (strain 972 / ATCC 24843) (Fission yeast), this protein is Probable L-asparaginase 4.